The chain runs to 343 residues: MECNPVSSTTSSSLLWDWDATASAEPPPPPGKRGGRDSSSASASAKRGRSAAAAGDAAAVAAEAPRCQVEGCGLELGGYKEYYRKHRVCEPHTKCLRVVVAGQDRRFCQQCSRFHAPSEFDQEKRSCRRRLSDHNARRRKPQTDVFAFGSGTLPRSLFDDRQQISFAWDNNAPLNHANTTSSSSWTSDLQLSQVMDISKRSRKAGADSANIRLSNALPTLCHDTNELLPIKGADASETASKLDGALDVQRALSLLSASSRGLTDPGHQTSSIIQFTNSNQNSTLPSVPSEGNSNVPFWVDGQHQAVEPQVFQFTMDTGNTVFPDLERIKPSYESSMFGLNQIH.

The disordered stretch occupies residues 1–48 (MECNPVSSTTSSSLLWDWDATASAEPPPPPGKRGGRDSSSASASAKRG). Composition is skewed to low complexity over residues 7-19 (SSTTSSSLLWDWD) and 37-48 (DSSSASASAKRG). Residues 64 to 141 (APRCQVEGCG…SDHNARRRKP (78 aa)) form an SBP-type zinc finger. Cys67, Cys72, Cys89, His92, Cys108, Cys111, His115, and Cys127 together coordinate Zn(2+). Residues 124–140 (KRSCRRRLSDHNARRRK) carry the Bipartite nuclear localization signal motif.

As to expression, expressed in stems, leaf sheaths, and young panicles.

It localises to the nucleus. In terms of biological role, trans-acting factor that binds specifically to the consensus nucleotide sequence 5'-TNCGTACAA-3'. May be involved in panicle development. This chain is Squamosa promoter-binding-like protein 11 (SPL11), found in Oryza sativa subsp. japonica (Rice).